Reading from the N-terminus, the 399-residue chain is S-adenosylmethionine synthase (399 aa).

Position 17 (His17) interacts with ATP. Asp19 lines the Mg(2+) pocket. A K(+)-binding site is contributed by Glu45. Glu58 and Gln101 together coordinate L-methionine. A flexible loop region spans residues 101-111 (QSADIAMGVDQ). Residues 177–179 (DGK), 244–245 (RF), Asp253, 259–260 (RK), Ala276, and Lys280 each bind ATP. Asp253 is a binding site for L-methionine. Lys284 provides a ligand contact to L-methionine.

It belongs to the AdoMet synthase family. In terms of assembly, homotetramer; dimer of dimers. It depends on Mg(2+) as a cofactor. The cofactor is K(+).

The protein localises to the cytoplasm. The enzyme catalyses L-methionine + ATP + H2O = S-adenosyl-L-methionine + phosphate + diphosphate. The protein operates within amino-acid biosynthesis; S-adenosyl-L-methionine biosynthesis; S-adenosyl-L-methionine from L-methionine: step 1/1. Functionally, catalyzes the formation of S-adenosylmethionine (AdoMet) from methionine and ATP. The overall synthetic reaction is composed of two sequential steps, AdoMet formation and the subsequent tripolyphosphate hydrolysis which occurs prior to release of AdoMet from the enzyme. The protein is S-adenosylmethionine synthase of Bacillus cereus (strain ATCC 10987 / NRS 248).